A 281-amino-acid chain; its full sequence is Phosphatidylglycerol--prolipoprotein diacylglyceryl transferase (281 aa).

7 helical membrane-spanning segments follow: residues 11-31 (IIFT…VISF), 57-77 (LLYS…IIFY), 89-109 (VFYI…AIIV), 121-141 (ILEI…AGRI), 194-214 (PTQL…IYFF), 222-242 (GSIS…IEFF), and 255-275 (IITM…IIMY). Arg-140 provides a ligand contact to a 1,2-diacyl-sn-glycero-3-phospho-(1'-sn-glycerol).

This sequence belongs to the Lgt family.

It localises to the cell inner membrane. The enzyme catalyses L-cysteinyl-[prolipoprotein] + a 1,2-diacyl-sn-glycero-3-phospho-(1'-sn-glycerol) = an S-1,2-diacyl-sn-glyceryl-L-cysteinyl-[prolipoprotein] + sn-glycerol 1-phosphate + H(+). It participates in protein modification; lipoprotein biosynthesis (diacylglyceryl transfer). In terms of biological role, catalyzes the transfer of the diacylglyceryl group from phosphatidylglycerol to the sulfhydryl group of the N-terminal cysteine of a prolipoprotein, the first step in the formation of mature lipoproteins. The chain is Phosphatidylglycerol--prolipoprotein diacylglyceryl transferase from Buchnera aphidicola subsp. Acyrthosiphon pisum (strain 5A).